The chain runs to 261 residues: 3-methyl-2-oxobutanoate hydroxymethyltransferase (261 aa).

Mg(2+)-binding residues include Asp47 and Asp86. Residues Asp47 to Ser48, Asp86, and Lys116 contribute to the 3-methyl-2-oxobutanoate site. A Mg(2+)-binding site is contributed by Glu118. Glu186 (proton acceptor) is an active-site residue.

This sequence belongs to the PanB family. As to quaternary structure, homodecamer; pentamer of dimers. Requires Mg(2+) as cofactor.

The protein resides in the cytoplasm. It carries out the reaction 3-methyl-2-oxobutanoate + (6R)-5,10-methylene-5,6,7,8-tetrahydrofolate + H2O = 2-dehydropantoate + (6S)-5,6,7,8-tetrahydrofolate. Its pathway is cofactor biosynthesis; (R)-pantothenate biosynthesis; (R)-pantoate from 3-methyl-2-oxobutanoate: step 1/2. In terms of biological role, catalyzes the reversible reaction in which hydroxymethyl group from 5,10-methylenetetrahydrofolate is transferred onto alpha-ketoisovalerate to form ketopantoate. The chain is 3-methyl-2-oxobutanoate hydroxymethyltransferase from Thermosynechococcus vestitus (strain NIES-2133 / IAM M-273 / BP-1).